Here is a 309-residue protein sequence, read N- to C-terminus: Taste receptor type 2 member 114 (309 aa).

At 1 to 7 the chain is on the extracellular side; sequence MLGAMEG. Residues 8 to 28 form a helical membrane-spanning segment; the sequence is VLLSVATSEALLGIVGNTFIA. Residues 29–43 lie on the Cytoplasmic side of the membrane; sequence LVNCMDCTRNKNLYN. A helical membrane pass occupies residues 44 to 64; it reads IGFILTGLAISRICLVWILIT. The Extracellular portion of the chain corresponds to 65 to 87; that stretch reads EAYIKIFSPQLLSPINIIELISY. Residues 88 to 108 traverse the membrane as a helical segment; the sequence is LWIITSQLNVWFATSLSIFYF. Residues 109-127 are Cytoplasmic-facing; that stretch reads LKIANFSHHIFLWLKRRIN. A helical transmembrane segment spans residues 128–148; that stretch reads IVFAFLIGCLLMSWLFSFPVV. At 149 to 182 the chain is on the extracellular side; that stretch reads VKMVKDKKMLYINSSWQIHMKKSELIINYVFTNG. N-linked (GlcNAc...) asparagine glycosylation occurs at N161. A helical transmembrane segment spans residues 183–203; the sequence is GVFLLFIIMLIVCFLLIISLW. At 204-233 the chain is on the cytoplasmic side; the sequence is RHSKWMQSNESGFRDLNTEVHVKTIKVLLS. Residues 234–254 form a helical membrane-spanning segment; sequence FIILFILHLIGITINVICLLV. The Extracellular portion of the chain corresponds to 255–259; sequence PENNL. Residues 260-280 form a helical membrane-spanning segment; sequence LFVFGLTIAFLYPCCHSLILI. Over 281-309 the chain is Cytoplasmic; that stretch reads LANSRLKRCFVRILQQLMCSEEGKEFRNT.

This sequence belongs to the G-protein coupled receptor T2R family.

The protein resides in the membrane. Functionally, putative taste receptor which may play a role in the perception of bitterness. The chain is Taste receptor type 2 member 114 from Rattus norvegicus (Rat).